Reading from the N-terminus, the 129-residue chain is Small ribosomal subunit protein uS9 (129 aa).

Belongs to the universal ribosomal protein uS9 family.

The chain is Small ribosomal subunit protein uS9 (rpsI) from Treponema pallidum (strain Nichols).